The primary structure comprises 307 residues: Phospho-N-acetylmuramoyl-pentapeptide-transferase (307 aa).

The next 10 helical transmembrane spans lie at 3-23, 47-67, 71-91, 105-125, 137-157, 162-182, 186-206, 210-230, 237-257, and 285-305; these read IILF…KYWI, SGTP…FLFF, FFPS…DFKL, IFLS…DYKI, IFYV…INLT, GLAG…NFQF, LTLE…FNSH, IFMG…LSII, LVFL…QVFF, and VVWR…ILWN.

It belongs to the glycosyltransferase 4 family. MraY subfamily. Requires Mg(2+) as cofactor.

It is found in the cell inner membrane. The enzyme catalyses UDP-N-acetyl-alpha-D-muramoyl-L-alanyl-gamma-D-glutamyl-meso-2,6-diaminopimeloyl-D-alanyl-D-alanine + di-trans,octa-cis-undecaprenyl phosphate = di-trans,octa-cis-undecaprenyl diphospho-N-acetyl-alpha-D-muramoyl-L-alanyl-D-glutamyl-meso-2,6-diaminopimeloyl-D-alanyl-D-alanine + UMP. The protein operates within cell wall biogenesis; peptidoglycan biosynthesis. Its function is as follows. Catalyzes the initial step of the lipid cycle reactions in the biosynthesis of the cell wall peptidoglycan: transfers peptidoglycan precursor phospho-MurNAc-pentapeptide from UDP-MurNAc-pentapeptide onto the lipid carrier undecaprenyl phosphate, yielding undecaprenyl-pyrophosphoryl-MurNAc-pentapeptide, known as lipid I. This Dictyoglomus turgidum (strain DSM 6724 / Z-1310) protein is Phospho-N-acetylmuramoyl-pentapeptide-transferase.